Reading from the N-terminus, the 296-residue chain is Transmembrane protein 156 (296 aa).

At methionine 1–threonine 4 the chain is on the cytoplasmic side. Residues alanine 5–phenylalanine 25 form a helical membrane-spanning segment. Residues lysine 26–serine 211 are Extracellular-facing. Asparagine 45 and asparagine 156 each carry an N-linked (GlcNAc...) asparagine glycan. Residues methionine 212–isoleucine 232 form a helical membrane-spanning segment. Over arginine 233 to leucine 296 the chain is Cytoplasmic.

The protein resides in the membrane. The polypeptide is Transmembrane protein 156 (TMEM156) (Homo sapiens (Human)).